The sequence spans 172 residues: Adrenodoxin-like protein 1, mitochondrial (172 aa).

The 103-residue stretch at 57–159 folds into the 2Fe-2S ferredoxin-type domain; sequence VNITYVDKDG…GMELELPKAT (103 aa). [2Fe-2S] cluster-binding residues include Cys-94, Cys-100, Cys-103, and Cys-140.

The protein belongs to the adrenodoxin/putidaredoxin family. It depends on [2Fe-2S] cluster as a cofactor.

The protein resides in the mitochondrion matrix. In terms of biological role, required for ecdysteroidogenesis in the prothoracic gland which is necessary for larval to pupal transition. In Drosophila melanogaster (Fruit fly), this protein is Adrenodoxin-like protein 1, mitochondrial.